Reading from the N-terminus, the 310-residue chain is Hydroxyacylglutathione hydrolase, mitochondrial (310 aa).

6 residues coordinate Zn(2+): His-104, His-106, Asp-108, His-109, His-160, and Asp-184. Residues 193–195 (KFF), 223–225 (HEY), and 299–302 (RKEK) contribute to the substrate site. His-223 contacts Zn(2+).

The protein belongs to the metallo-beta-lactamase superfamily. Glyoxalase II family. Monomer. Zn(2+) is required as a cofactor.

The protein resides in the mitochondrion matrix. It is found in the cytoplasm. It catalyses the reaction an S-(2-hydroxyacyl)glutathione + H2O = a 2-hydroxy carboxylate + glutathione + H(+). It carries out the reaction (R)-S-lactoylglutathione + H2O = (R)-lactate + glutathione + H(+). Functionally, thiolesterase that catalyzes the hydrolysis of S-D-lactoyl-glutathione to form glutathione and D-lactic acid. The chain is Hydroxyacylglutathione hydrolase, mitochondrial (HAGH) from Gallus gallus (Chicken).